We begin with the raw amino-acid sequence, 282 residues long: Formamidopyrimidine-DNA glycosylase (282 aa).

The active-site Schiff-base intermediate with DNA is the Pro-2. Glu-3 functions as the Proton donor in the catalytic mechanism. Residue Lys-60 is the Proton donor; for beta-elimination activity of the active site. His-99, Arg-118, and Lys-163 together coordinate DNA. The segment at Trp-248–Lys-282 adopts an FPG-type zinc-finger fold. Arg-272 (proton donor; for delta-elimination activity) is an active-site residue.

It belongs to the FPG family. In terms of assembly, monomer. Zn(2+) serves as cofactor.

The enzyme catalyses Hydrolysis of DNA containing ring-opened 7-methylguanine residues, releasing 2,6-diamino-4-hydroxy-5-(N-methyl)formamidopyrimidine.. The catalysed reaction is 2'-deoxyribonucleotide-(2'-deoxyribose 5'-phosphate)-2'-deoxyribonucleotide-DNA = a 3'-end 2'-deoxyribonucleotide-(2,3-dehydro-2,3-deoxyribose 5'-phosphate)-DNA + a 5'-end 5'-phospho-2'-deoxyribonucleoside-DNA + H(+). In terms of biological role, involved in base excision repair of DNA damaged by oxidation or by mutagenic agents. Acts as a DNA glycosylase that recognizes and removes damaged bases. Has a preference for oxidized purines, such as 7,8-dihydro-8-oxoguanine (8-oxoG). Has AP (apurinic/apyrimidinic) lyase activity and introduces nicks in the DNA strand. Cleaves the DNA backbone by beta-delta elimination to generate a single-strand break at the site of the removed base with both 3'- and 5'-phosphates. In Prochlorococcus marinus (strain NATL2A), this protein is Formamidopyrimidine-DNA glycosylase.